The chain runs to 154 residues: Nucleoside diphosphate kinase A2 (154 aa).

Positions 13, 61, 89, 95, 106, and 116 each coordinate ATP. Residue H119 is the Pros-phosphohistidine intermediate of the active site.

The protein belongs to the NDK family. The cofactor is Mg(2+).

It is found in the cytoplasm. It carries out the reaction a 2'-deoxyribonucleoside 5'-diphosphate + ATP = a 2'-deoxyribonucleoside 5'-triphosphate + ADP. The catalysed reaction is a ribonucleoside 5'-diphosphate + ATP = a ribonucleoside 5'-triphosphate + ADP. Its function is as follows. Major role in the synthesis of nucleoside triphosphates other than ATP. The ATP gamma phosphate is transferred to the NDP beta phosphate via a ping-pong mechanism, using a phosphorylated active-site intermediate. The sequence is that of Nucleoside diphosphate kinase A2 from Xenopus laevis (African clawed frog).